We begin with the raw amino-acid sequence, 913 residues long: Glutamate receptor ionotropic, kainate 2 (913 aa).

The Extracellular segment spans residues 1–566; sequence MCAGTMKIIS…VFSFLNPLSP (566 aa). Residues N72, N78, N280, N383, N417, N428, and N435 are each glycosylated (N-linked (GlcNAc...) asparagine). C101 and C352 are disulfide-bonded. L-glutamate contacts are provided by P521, A523, and R528. N551 is a glycosylation site (N-linked (GlcNAc...) asparagine). The chain crosses the membrane as a helical span at residues 567 to 587; the sequence is DIWMYILLAYLGVSCVLFVIA. Over 588 to 643 the chain is Cytoplasmic; sequence RFSPYEWYNPHPCNPDSDVVENNFTLLNSFWFGVGALMQQGSELMPKALSTRIVGG. The helical transmembrane segment at 644–664 threads the bilayer; the sequence is IWWFFTLIIISSYTANLAAFL. The Extracellular portion of the chain corresponds to 665–824; the sequence is TVERMESPID…KEASALGVQN (160 aa). The L-glutamate site is built by A694, T695, and E743. C755 and C809 are joined by a disulfide. An N-linked (GlcNAc...) asparagine glycan is attached at N756. The chain crosses the membrane as a helical span at residues 825-845; the sequence is IGGIFIVLAAGLVLSVFVAVG. Over 846-913 the chain is Cytoplasmic; the sequence is EFLYKSKKNA…RRLPGKETMA (68 aa).

This sequence belongs to the glutamate-gated ion channel (TC 1.A.10.1) family. GRIK2 subfamily. In terms of assembly, homotetramer and heterotetramer with GRIK5. Tetramers may be formed by the dimerization of dimers.

Its subcellular location is the cell membrane. It is found in the postsynaptic cell membrane. The catalysed reaction is Ca(2+)(in) = Ca(2+)(out). It carries out the reaction Na(+)(in) = Na(+)(out). Its activity is regulated as follows. Cold receptor activity activated by temperatures between 10-19 degrees Celsius. Its function is as follows. Ionotropic glutamate receptor that functions as a cation-permeable ligand-gated ion channel, gated by L-glutamate and the glutamatergic agonist kainic acid. L-glutamate acts as an excitatory neurotransmitter at many synapses in the central nervous system. Binding of the excitatory neurotransmitter L-glutamate induces a conformation change, leading to the opening of the cation channel, and thereby converts the chemical signal to an electrical impulse. The receptor then desensitizes rapidly and enters a transient inactive state, characterized by the presence of bound agonist. Independent of its ionotropic glutamate receptor activity, acts as a thermoreceptor conferring sensitivity to cold temperatures. Functions in dorsal root ganglion neurons. The sequence is that of Glutamate receptor ionotropic, kainate 2 (grik2) from Xenopus laevis (African clawed frog).